The sequence spans 132 residues: Small ribosomal subunit protein uS11 (132 aa).

This sequence belongs to the universal ribosomal protein uS11 family. As to quaternary structure, part of the 30S ribosomal subunit. Interacts with proteins S7 and S18. Binds to IF-3.

Located on the platform of the 30S subunit, it bridges several disparate RNA helices of the 16S rRNA. Forms part of the Shine-Dalgarno cleft in the 70S ribosome. The sequence is that of Small ribosomal subunit protein uS11 from Chlamydia abortus (strain DSM 27085 / S26/3) (Chlamydophila abortus).